Reading from the N-terminus, the 507-residue chain is Hippocampus abundant transcript-like protein 1 (507 aa).

A disordered region spans residues 1 to 27 (MSTDGESPEEPRWKAVASPKASTMPEK). The Extracellular segment spans residues 1 to 51 (MSTDGESPEEPRWKAVASPKASTMPEKRGSAQAASGSWLQGFGHPSVYHAA). A helical membrane pass occupies residues 52–72 (FVIFLEFFAWGLLTTPMLTVL). The Cytoplasmic portion of the chain corresponds to 73-84 (HETFPQHTFLMN). A helical transmembrane segment spans residues 85–105 (GLIQGVKGLLSFLSAPLIGAL). Over 106–113 (SDVWGRKP) the chain is Extracellular. A helical transmembrane segment spans residues 114 to 134 (FLLGTVFFTCFPIPLMRINPW). The Cytoplasmic portion of the chain corresponds to 135-136 (WY). A helical membrane pass occupies residues 137–157 (FGMISVSGVFSVTFSVIFAYV). At 158-170 (ADFTQEHERSTAY) the chain is on the extracellular side. The chain crosses the membrane as a helical span at residues 171–191 (GWVSATFAASLVSSPAIGTYL). Residues 192–198 (SANYGDS) lie on the Cytoplasmic side of the membrane. Residues 199–219 (LVVLVATLVALLDICFILIAV) traverse the membrane as a helical segment. Residues 220 to 257 (PESLSEKIRPASWGAQISWKQADPFASLKKVGKDSTVL) lie on the Extracellular side of the membrane. A helical membrane pass occupies residues 258–278 (LICITVFLSYLPEAGQYSSFF). Topologically, residues 279 to 283 (LYLRQ) are cytoplasmic. Residues 284–304 (VIGFGSVKIVAFIAMVGILSI) form a helical membrane-spanning segment. The Extracellular segment spans residues 305 to 323 (VAQTVFLSKLMRSLGNKNT). Residues 324-344 (VLLGLGFQMLQLAWYGFGSQA) form a helical membrane-spanning segment. The Cytoplasmic segment spans residues 345–347 (WMM). A helical membrane pass occupies residues 348–368 (WAAGTVAAMSSITFPAVSALI). The Extracellular portion of the chain corresponds to 369 to 389 (SRNAESDQQGVAQGIVTGIRG). Residues 390–410 (LCNGLGPALYGFIFYMFHVEL) traverse the membrane as a helical segment. The Cytoplasmic portion of the chain corresponds to 411 to 430 (SELGPKLNSDDDPLQGAFIP). Residues 431–451 (GPPFLFGACIVLMSFLVALFI) traverse the membrane as a helical segment. At 452 to 507 (PEYRKTSGVQKHNNSTSGSLSTPPERGSDEDIEPLLQDSSIWELSFEEPGNQCTEL) the chain is on the extracellular side. Residues 459–473 (GVQKHNNSTSGSLST) are compositionally biased toward polar residues. The disordered stretch occupies residues 459–483 (GVQKHNNSTSGSLSTPPERGSDEDI). Asn464 and Asn465 each carry an N-linked (GlcNAc...) asparagine glycan.

This sequence belongs to the major facilitator superfamily.

It is found in the membrane. The protein is Hippocampus abundant transcript-like protein 1 of Mus musculus (Mouse).